A 447-amino-acid chain; its full sequence is Cysteine--tRNA ligase (447 aa).

Residue cysteine 28 participates in Zn(2+) binding. The 'HIGH' region motif lies at 30 to 40 (PTVYNYIHIGN). 3 residues coordinate Zn(2+): cysteine 211, histidine 236, and glutamate 240. The 'KMSKS' region signature appears at 268 to 272 (KMSKS). An ATP-binding site is contributed by lysine 271.

Belongs to the class-I aminoacyl-tRNA synthetase family. Monomer. It depends on Zn(2+) as a cofactor.

Its subcellular location is the cytoplasm. The catalysed reaction is tRNA(Cys) + L-cysteine + ATP = L-cysteinyl-tRNA(Cys) + AMP + diphosphate. The protein is Cysteine--tRNA ligase of Streptococcus pyogenes serotype M6 (strain ATCC BAA-946 / MGAS10394).